Reading from the N-terminus, the 206-residue chain is Large ribosomal subunit protein uL4 (206 aa).

Residues Thr47–Ala77 are disordered.

The protein belongs to the universal ribosomal protein uL4 family. As to quaternary structure, part of the 50S ribosomal subunit.

One of the primary rRNA binding proteins, this protein initially binds near the 5'-end of the 23S rRNA. It is important during the early stages of 50S assembly. It makes multiple contacts with different domains of the 23S rRNA in the assembled 50S subunit and ribosome. In terms of biological role, forms part of the polypeptide exit tunnel. The sequence is that of Large ribosomal subunit protein uL4 from Nitrosomonas europaea (strain ATCC 19718 / CIP 103999 / KCTC 2705 / NBRC 14298).